Here is a 305-residue protein sequence, read N- to C-terminus: UDP-3-O-acyl-N-acetylglucosamine deacetylase (305 aa).

Residues H79, H238, and D242 each coordinate Zn(2+). Catalysis depends on H265, which acts as the Proton donor.

The protein belongs to the LpxC family. It depends on Zn(2+) as a cofactor.

The enzyme catalyses a UDP-3-O-[(3R)-3-hydroxyacyl]-N-acetyl-alpha-D-glucosamine + H2O = a UDP-3-O-[(3R)-3-hydroxyacyl]-alpha-D-glucosamine + acetate. The protein operates within glycolipid biosynthesis; lipid IV(A) biosynthesis; lipid IV(A) from (3R)-3-hydroxytetradecanoyl-[acyl-carrier-protein] and UDP-N-acetyl-alpha-D-glucosamine: step 2/6. Its function is as follows. Catalyzes the hydrolysis of UDP-3-O-myristoyl-N-acetylglucosamine to form UDP-3-O-myristoylglucosamine and acetate, the committed step in lipid A biosynthesis. In Pasteurella multocida (strain Pm70), this protein is UDP-3-O-acyl-N-acetylglucosamine deacetylase.